Here is a 191-residue protein sequence, read N- to C-terminus: Programmed cell death protein 6 (191 aa).

Ala2 bears the N-acetylalanine mark. EF-hand domains are found at residues Pro23–Thr58, Pro59–Trp89, Lys90–Arg125, Leu126–Leu161, and Thr162–Val191. Ca(2+) is bound by residues Asp36, Asp38, Ser40, Val42, and Glu47. Positions 103, 105, 107, 109, and 114 each coordinate Ca(2+). Positions 169, 171, 173, and 175 each coordinate Mg(2+).

In terms of assembly, homodimer and heterodimer; heterodimerizes (via the EF-hand 5) with PEF1. Isoform 1 and isoform 2 self-associate; probably forming homodimers. Interacts with CPNE4 (via VWFA domain). Interacts with PDCD6IP; the interaction is calcium-dependent. Interacts with RBM22. Interacts with PLSCR4. Interacts with ANXA7 and TSG101. Interacts with DAPK1. Interacts with SEC31A; the interaction is calcium-dependent and promotes monoubiquitination of SEC31A. Interacts with ANXA11 (via N-terminus); the interaction is calcium-dependent. Interacts with PLSCR3 (via N-terminus); the interaction is calcium-dependent. Interacts with MCOLN1; the interaction is calcium-dependent. Interacts with KDR; the interaction is calcium-dependent. Interacts with HEBP2; the interaction is calcium-dependent. Interacts with TFG. Isoform 1: Interacts with SHISA5, leading to stabilize it. Isoform 2: Does not interact with SHISA5. Isoform 2: Does not interact with PDCD6IP, TSG101, ANXA7 and ANXA11.

The protein resides in the endoplasmic reticulum membrane. It is found in the cytoplasmic vesicle. Its subcellular location is the COPII-coated vesicle membrane. The protein localises to the cytoplasm. It localises to the nucleus. The protein resides in the endosome. Functionally, calcium sensor that plays a key role in processes such as endoplasmic reticulum (ER)-Golgi vesicular transport, endosomal biogenesis or membrane repair. Acts as an adapter that bridges unrelated proteins or stabilizes weak protein-protein complexes in response to calcium: calcium-binding triggers exposure of apolar surface, promoting interaction with different sets of proteins thanks to 3 different hydrophobic pockets, leading to translocation to membranes. Involved in ER-Golgi transport by promoting the association between PDCD6IP and TSG101, thereby bridging together the ESCRT-III and ESCRT-I complexes. Together with PEF1, acts as a calcium-dependent adapter for the BCR(KLHL12) complex, a complex involved in ER-Golgi transport by regulating the size of COPII coats. In response to cytosolic calcium increase, the heterodimer formed with PEF1 interacts with, and bridges together the BCR(KLHL12) complex and SEC31 (SEC31A or SEC31B), promoting monoubiquitination of SEC31 and subsequent collagen export, which is required for neural crest specification. Involved in the regulation of the distribution and function of MCOLN1 in the endosomal pathway. Promotes localization and polymerization of TFG at endoplasmic reticulum exit site. Required for T-cell receptor-, Fas-, and glucocorticoid-induced apoptosis. May mediate Ca(2+)-regulated signals along the death pathway: interaction with DAPK1 can accelerate apoptotic cell death by increasing caspase-3 activity. Its role in apoptosis may however be indirect, as suggested by knockout experiments. May inhibit KDR/VEGFR2-dependent angiogenesis; the function involves inhibition of VEGF-induced phosphorylation of the Akt signaling pathway. In terms of biological role, has a lower Ca(2+) affinity than isoform 1. This Mus musculus (Mouse) protein is Programmed cell death protein 6 (Pdcd6).